A 38-amino-acid chain; its full sequence is Large ribosomal subunit protein bL36 (38 aa).

This sequence belongs to the bacterial ribosomal protein bL36 family.

The sequence is that of Large ribosomal subunit protein bL36 from Paraburkholderia phymatum (strain DSM 17167 / CIP 108236 / LMG 21445 / STM815) (Burkholderia phymatum).